A 337-amino-acid polypeptide reads, in one-letter code: Biotin synthase (337 aa).

The 230-residue stretch at 52-281 (ADIQRASLLS…RSRVRLSAGR (230 aa)) folds into the Radical SAM core domain. [4Fe-4S] cluster-binding residues include Cys-67, Cys-71, and Cys-74. [2Fe-2S] cluster-binding residues include Cys-112, Cys-144, Cys-204, and Arg-276.

Belongs to the radical SAM superfamily. Biotin synthase family. In terms of assembly, homodimer. Requires [4Fe-4S] cluster as cofactor. The cofactor is [2Fe-2S] cluster.

It carries out the reaction (4R,5S)-dethiobiotin + (sulfur carrier)-SH + 2 reduced [2Fe-2S]-[ferredoxin] + 2 S-adenosyl-L-methionine = (sulfur carrier)-H + biotin + 2 5'-deoxyadenosine + 2 L-methionine + 2 oxidized [2Fe-2S]-[ferredoxin]. It functions in the pathway cofactor biosynthesis; biotin biosynthesis; biotin from 7,8-diaminononanoate: step 2/2. In terms of biological role, catalyzes the conversion of dethiobiotin (DTB) to biotin by the insertion of a sulfur atom into dethiobiotin via a radical-based mechanism. In Methylobacterium radiotolerans (strain ATCC 27329 / DSM 1819 / JCM 2831 / NBRC 15690 / NCIMB 10815 / 0-1), this protein is Biotin synthase.